A 312-amino-acid chain; its full sequence is Protein lon-1 (312 aa).

Positions 1–18 are cleaved as a signal peptide; that stretch reads MNYLLTALIALLAPISVA. The 123-residue stretch at 87 to 209 folds into the SCP domain; it reads EHNRYRRMVP…GHRNVFVCHY (123 aa). N-linked (GlcNAc...) asparagine glycosylation occurs at N142. Low complexity predominate over residues 265–284; the sequence is TTTTESTTTSTTTEEPTTTC. The tract at residues 265–312 is disordered; the sequence is TTTTESTTTSTTTEEPTTTCEPDEPEAEGADNNQEEEEENNDGFRMRV. Positions 285–305 are enriched in acidic residues; that stretch reads EPDEPEAEGADNNQEEEEENN.

The protein belongs to the CRISP family. Expressed in hypodermal tissues.

Its function is as follows. Regulates body size morphogenesis, but does not affect male tail development. The sequence is that of Protein lon-1 (lon-1) from Caenorhabditis elegans.